The primary structure comprises 374 residues: 4-galactosyl-N-acetylglucosaminide 3-alpha-L-fucosyltransferase FUT5 (374 aa).

Residues 1-15 (MDPLGPAKPQWLWRR) are Cytoplasmic-facing. A helical; Signal-anchor for type II membrane protein transmembrane segment spans residues 16 to 34 (CLAGLLFQLLVAVCFFSYL). Residues 35 to 374 (RVSQDHATGS…TVRSIAAWFT (340 aa)) lie on the Lumenal side of the membrane. N-linked (GlcNAc...) asparagine glycosylation is found at Asn60, Asn105, Asn167, and Asn198.

This sequence belongs to the glycosyltransferase 10 family.

The protein localises to the golgi apparatus. It localises to the golgi stack membrane. It carries out the reaction a beta-D-galactosyl-(1-&gt;3)-N-acetyl-beta-D-glucosaminyl derivative + GDP-beta-L-fucose = a beta-D-galactosyl-(1-&gt;3)-[alpha-L-fucosyl-(1-&gt;4)]-N-acetyl-beta-D-glucosaminyl derivative + GDP + H(+). The enzyme catalyses an N-acetyl-alpha-neuraminyl-(2-&gt;3)-beta-D-galactosyl-(1-&gt;4)-N-acetyl-beta-D-glucosaminyl derivative + GDP-beta-L-fucose = an alpha-Neu5Ac-(2-&gt;3)-beta-D-Gal-(1-&gt;4)-[alpha-L-Fuc-(1-&gt;3)]-beta-D-GlcNAc derivative + GDP + H(+). The catalysed reaction is an alpha-Neu5Ac-(2-&gt;3)-beta-D-Gal-(1-&gt;4)-beta-D-GlcNAc-(1-&gt;3)-beta-D-Gal-(1-&gt;4)-[alpha-L-Fuc-(1-&gt;3)]-beta-D-GlcNAc derivative + GDP-beta-L-fucose = an alpha-Neu5Ac-(2-&gt;3)-beta-D-Gal-(1-&gt;4)-[alpha-L-Fuc-(1-&gt;3)]-beta-D-GlcNAc-(1-&gt;3)-beta-D-Gal-(1-&gt;4)-[alpha-L-Fuc-(1-&gt;3)]-beta-D-GlcNAc derivative + GDP + H(+). It catalyses the reaction a beta-D-galactosyl-(1-&gt;4)-N-acetyl-beta-D-glucosaminyl derivative + GDP-beta-L-fucose = a beta-D-galactosyl-(1-&gt;4)-[alpha-L-fucosyl-(1-&gt;3)]-N-acetyl-beta-D-glucosaminyl derivative + GDP + H(+). It carries out the reaction a neolactoside nLc4Cer + GDP-beta-L-fucose = a neolactoside III(3)-alpha-Fuc-nLc4Cer + GDP + H(+). The enzyme catalyses a neolactoside nLc6Cer + GDP-beta-L-fucose = beta-D-galactosyl-(1-&gt;4)-N-acetyl-beta-D-glucosaminyl-(1-&gt;3)-beta-D-galactosyl-(1-&gt;4)-[alpha-L-fucosyl-(1-&gt;3)]-N-acetyl-beta-D-glucosaminyl-(1-&gt;3)-beta-D-galactosyl-(1-&gt;4)-beta-D-glucosyl-(1&lt;-&gt;1')-ceramide + GDP + H(+). The catalysed reaction is a neolactoside nLc6Cer(d18:1(4E)) + GDP-beta-L-fucose = a neolactoside III(3)-alpha-Fuc-nLc6Cer(d18:1(4E)) + GDP + H(+). It catalyses the reaction a neolactoside nLc4Cer(d18:1(4E)) + GDP-beta-L-fucose = a neolactoside III(3)-alpha-Fuc-nLc4Cer(d18:1(4E)) + GDP + H(+). It carries out the reaction a neolactoside VI(3)-alpha-NeuNAc-nLc6Cer + GDP-beta-L-fucose = a neolactoside VI(3)-alpha-NeuAc,III(3)-alphaFuc-nLc6Cer + GDP + H(+). The enzyme catalyses beta-D-galactosyl-(1-&gt;4)-N-acetyl-D-glucosamine + GDP-beta-L-fucose = beta-D-galactosyl-(1-&gt;4)-[alpha-L-fucosyl-(1-&gt;3)]-N-acetyl-D-glucosamine + GDP + H(+). The catalysed reaction is N-acetyl-alpha-neuraminosyl-(2-&gt;3)-beta-D-galactosyl-(1-&gt;4)-N-acetyl-beta-D-glucosamine + GDP-beta-L-fucose = N-acetyl-alpha-neuraminosyl-(2-&gt;3)-beta-D-galactosyl-(1-&gt;4)-[alpha-L-fucosyl-(1-&gt;3)]-N-acetyl-beta-D-glucosamine + GDP + H(+). It catalyses the reaction alpha-L-Fuc-(1-&gt;2)-beta-D-Gal-(1-&gt;4)-D-GlcNAc + GDP-beta-L-fucose = alpha-L-Fuc-(1-&gt;2)-beta-D-Gal-(1-&gt;4)-[alpha-L-Fuc-(1-&gt;3)]-D-GlcNAc + GDP + H(+). It carries out the reaction an alpha-Neu5Ac-(2-&gt;3)-beta-D-Gal-(1-&gt;3)-D-GlcNAc derivative + GDP-beta-L-fucose = an alpha-Neu5Ac-(2-&gt;3)-beta-D-Gal-(1-&gt;3)-[alpha-L-Fuc-(1-&gt;4)]-beta-D-GlcNAc derivative + GDP + H(+). Its pathway is protein modification; protein glycosylation. Functionally, catalyzes preferentially the transfer of L-fucose, from a guanosine diphosphate-beta-L-fucose, to the N-acetyl-beta-D-glucosamine (GlcNAc) of an N-acetyllactosamine unit (type 2 chain) of an oligosaccharide, or a glycoprotein- and a glycolipid-linked N-acetyllactosamine unit via an alpha (1,3) linkage and participates in the surface expression of VIM-2, Lewis X/SSEA-1 and sialyl Lewis X antigens. Preferentially transfers fucose to the GlcNAc of an internal N-acetyllactosamine unit of a poly-N-acetyllactosamine chain acceptor substrate. Also catalyzes to a lesser extend the transfer of L-fucose to the GlcNAc of a type 1 (beta-D-galactosyl-(1-&gt;3)-N-acetyl-beta-D-glucosaminyl) or H-type 1 (alpha-L-Fuc-(1-&gt;2)-beta-D-Gal-(1-&gt;3)-D-GlcNAc) chain oligosaccharide via an alpha (1,4) linkage. Preferentially catalyzes sialylated type 2 oligosaccharide acceptors over neutral type 2 or H type 2 (alpha-L-Fuc-(1-&gt;2)-beta-D-Gal-(1-&gt;4)-D-GlcNAc) oligosaccharide acceptors. Lactose-based structures are also acceptor substrates. The polypeptide is 4-galactosyl-N-acetylglucosaminide 3-alpha-L-fucosyltransferase FUT5 (Gorilla gorilla gorilla (Western lowland gorilla)).